The chain runs to 125 residues: Holo-[acyl-carrier-protein] synthase (125 aa).

Mg(2+)-binding residues include Asp8 and Glu57.

This sequence belongs to the P-Pant transferase superfamily. AcpS family. It depends on Mg(2+) as a cofactor.

The protein localises to the cytoplasm. The catalysed reaction is apo-[ACP] + CoA = holo-[ACP] + adenosine 3',5'-bisphosphate + H(+). In terms of biological role, transfers the 4'-phosphopantetheine moiety from coenzyme A to a Ser of acyl-carrier-protein. The chain is Holo-[acyl-carrier-protein] synthase from Solibacter usitatus (strain Ellin6076).